The sequence spans 204 residues: MNFLNFSMLVFAYLLGSINSAIIVCYIFRLPSPRSVGSGNPGTTNVLRIGGNVPAIITLAFDILKGLVPVVLAKVLTGNEFITACTALYAILGHIFPIFFGFKGGKGVATLIGTLFGFSWILGLIFVVTWLCVAVITRYSSLSALVATVIASFSVIFTSDLQVATPFLIIAIIILVKHKGNIQRLISGQESKIGDKAKAKNDSN.

The next 5 membrane-spanning stretches (helical) occupy residues 8-28 (MLVF…CYIF), 53-73 (VPAI…VVLA), 81-101 (FITA…IFFG), 116-136 (FGFS…VAVI), and 155-175 (VIFT…IIIL).

The protein belongs to the PlsY family. In terms of assembly, probably interacts with PlsX.

It localises to the cell inner membrane. It carries out the reaction an acyl phosphate + sn-glycerol 3-phosphate = a 1-acyl-sn-glycero-3-phosphate + phosphate. It participates in lipid metabolism; phospholipid metabolism. Its function is as follows. Catalyzes the transfer of an acyl group from acyl-phosphate (acyl-PO(4)) to glycerol-3-phosphate (G3P) to form lysophosphatidic acid (LPA). This enzyme utilizes acyl-phosphate as fatty acyl donor, but not acyl-CoA or acyl-ACP. In Francisella philomiragia subsp. philomiragia (strain ATCC 25017 / CCUG 19701 / FSC 153 / O#319-036), this protein is Glycerol-3-phosphate acyltransferase.